The following is a 93-amino-acid chain: MLKLEMMLVVLLILPLFYFDAGGQVVQRDWRSDGLARYLQRGDRDVRECNINTPGSSWGKCCLTRMCGPMCCARSGCTCVYHWRRGHGCSCPG.

Residues 1 to 23 (MLKLEMMLVVLLILPLFYFDAGG) form the signal peptide. The propeptide occupies 24–45 (QVVQRDWRSDGLARYLQRGDRD). Glu-48 carries the 4-carboxyglutamate modification. Pro-54 is modified (4-hydroxyproline). 4 disulfides stabilise this stretch: Cys-62–Cys-71, Cys-67–Cys-79, Cys-72–Cys-89, and Cys-77–Cys-91.

It belongs to the conotoxin D superfamily. Hetero-, homo- or pseudo-homodimer (identical sequence, different post-translational modifications). Heterodimer of [carboxyGlu-48, hydroxyPro-54]Ms20.1 and [carboxy'Glu-50', hydroxy'Pro-56']Ms20.4 may exist. Expressed by the venom duct.

It localises to the secreted. Functionally, alpha-conotoxins act on postsynaptic membranes, they bind to the nicotinic acetylcholine receptors (nAChR) and thus inhibit them. Through its two C-terminal domains, this homodimeric protein would bind to two nAChR allosteric sites, located outside the nAChR C-loop of the principal binding face and at the adjacent binding interface in a clockwise direction. This toxin specifically blocks mammalian neuronal nAChR of the alpha-7/CHRNA7, alpha-3-beta-2/CHRNA3-CHRNB2 and alpha-4-beta-2/CHRNA4-CHRNB2 subtypes. This is Alpha-conotoxin-like Ms20.1 from Conus mustelinus (Weasel cone).